The primary structure comprises 261 residues: Fructoselysine 6-kinase (261 aa).

It belongs to the carbohydrate kinase PfkB family. As to quaternary structure, monomer.

The enzyme catalyses N(6)-(D-fructosyl)-L-lysine + ATP = N(6)-(6-phospho-D-fructosyl)-L-lysine + ADP + H(+). It functions in the pathway carbohydrate metabolism; fructoselysine degradation; D-glucose 6-phosphate and lysine from fructoselysine: step 1/2. Its function is as follows. Catalyzes the ATP-dependent phosphorylation of fructoselysine to fructoselysine 6-phosphate. May function in a fructoselysine degradation pathway that allows S.flexneri to grow on fructoselysine or psicoselysine. This Shigella flexneri protein is Fructoselysine 6-kinase (frlD).